A 379-amino-acid chain; its full sequence is Glutamate 5-kinase (379 aa).

Lys14 provides a ligand contact to ATP. Substrate is bound by residues Ser54, Asp141, and Asn153. Residues 173-174 and 215-221 contribute to the ATP site; these read TD and TGGMATK. Positions 280-358 constitute a PUA domain; it reads KGRLLLDIGA…DEIEPLLGYD (79 aa).

It belongs to the glutamate 5-kinase family.

The protein localises to the cytoplasm. It catalyses the reaction L-glutamate + ATP = L-glutamyl 5-phosphate + ADP. It functions in the pathway amino-acid biosynthesis; L-proline biosynthesis; L-glutamate 5-semialdehyde from L-glutamate: step 1/2. Catalyzes the transfer of a phosphate group to glutamate to form L-glutamate 5-phosphate. The polypeptide is Glutamate 5-kinase (Shewanella amazonensis (strain ATCC BAA-1098 / SB2B)).